A 440-amino-acid polypeptide reads, in one-letter code: Thymidine phosphorylase (440 aa).

Belongs to the thymidine/pyrimidine-nucleoside phosphorylase family. In terms of assembly, homodimer.

It carries out the reaction thymidine + phosphate = 2-deoxy-alpha-D-ribose 1-phosphate + thymine. The protein operates within pyrimidine metabolism; dTMP biosynthesis via salvage pathway; dTMP from thymine: step 1/2. Its function is as follows. The enzymes which catalyze the reversible phosphorolysis of pyrimidine nucleosides are involved in the degradation of these compounds and in their utilization as carbon and energy sources, or in the rescue of pyrimidine bases for nucleotide synthesis. This is Thymidine phosphorylase from Shigella boydii serotype 4 (strain Sb227).